A 450-amino-acid polypeptide reads, in one-letter code: Caspase Dronc (450 aa).

A propeptide spanning residues 1–134 is cleaved from the precursor; it reads MQPPELEIGM…RTSRKSADIV (134 aa). One can recognise a CARD domain in the interval 64–109; it reads EKDVRVEQHRRLLLKITQRGPTAYNLLINALRNINCLDAAVLLESV. The segment at 114 to 125 is required for binding Diap1; the sequence is SRPPFISLNERR. Catalysis depends on residues His271 and Cys318. A propeptide spanning residues 321–324 is cleaved from the precursor; that stretch reads DEYD.

The protein belongs to the peptidase C14A family. As to quaternary structure, interacts (via residues 114-125) with Diap1 (via BIR 2 domain); binding blocks Dronc-mediated cell death. Can form a stable complex with Drice. Rpr, hid and grim can out-compete Dronc for binding Diap1, therefore removing Diap1-mediated ubiquitination. Interacts (via CARD domain) with Dark (via Dark CARD and WD domains); the interaction stimulates Dark oligomerization to form the apoptosome and brings pairs of Dronc molecules together on the apoptosome to facilitate their dimerization and activation by autocatalytic cleavage. Binding to Dark stimulates apoptosome assembly. After autocatalytic cleavage the Dronc caspase domain dissociates from the apoptosome but the CARD domain remains associated. Ubiquitinated by Diap1, leading to its subsequent degradation. As to expression, ubiquitously expressed in embryos during early stages of development. In late third instar larvae, dramatic up-regulation in salivary glands and midgut before histolysis of these tissues.

It localises to the cytoplasm. The enzyme catalyses Strict requirement for an Asp residue at position P1 and with a marked preference for His at position P2. It has a preferred cleavage sequence of Leu-Gly-His-Asp-|-Xaa.. Zymogen activated by autocatalytic cleavage; association with the Dark apoptosome brings multiple molecules together to facilitate their dimerization and activation by autocatalytic cleavage. Involved in the activation cascade of caspases responsible for apoptosis execution. Effector of steroid-mediated apoptosis during insect metamorphosis. Overexpression promotes programmed cell death. Interaction with Diap1 is required to suppress Dronc-mediated cell death; via Diap1-mediated ubiquitination of Dronc. Rate-limiting caspase in rpr, grim and hid death pathway. Recruited to the Dark apoptosome, an adapter protein complex that mediates activation of the caspase cascade in programmed cell death initiated by the intrinsic apoptosis pathway. Association with the Dark apoptosome stimulates autocatalytic cleavage and activation of Dronc, promoting Dronc-mediated cleavage of downstream effector caspases such as Drice. In Drosophila melanogaster (Fruit fly), this protein is Caspase Dronc.